The chain runs to 261 residues: 5'-nucleotidase SurE (261 aa).

A divalent metal cation contacts are provided by D12, D13, S43, and N100.

The protein belongs to the SurE nucleotidase family. Requires a divalent metal cation as cofactor.

The protein localises to the cytoplasm. It catalyses the reaction a ribonucleoside 5'-phosphate + H2O = a ribonucleoside + phosphate. Nucleotidase that shows phosphatase activity on nucleoside 5'-monophosphates. The sequence is that of 5'-nucleotidase SurE from Protochlamydia amoebophila (strain UWE25).